The chain runs to 205 residues: LexA repressor (205 aa).

Positions 28–48 form a DNA-binding region, H-T-H motif; that stretch reads RAEIARRLGFKSANAAEEHLK. Active-site for autocatalytic cleavage activity residues include serine 122 and lysine 159.

This sequence belongs to the peptidase S24 family. Homodimer.

The enzyme catalyses Hydrolysis of Ala-|-Gly bond in repressor LexA.. Represses a number of genes involved in the response to DNA damage (SOS response), including recA and lexA. In the presence of single-stranded DNA, RecA interacts with LexA causing an autocatalytic cleavage which disrupts the DNA-binding part of LexA, leading to derepression of the SOS regulon and eventually DNA repair. The protein is LexA repressor of Shewanella loihica (strain ATCC BAA-1088 / PV-4).